The chain runs to 310 residues: DDRGK domain-containing protein 1 (310 aa).

A helical membrane pass occupies residues 1-21 (MAAIIYLAIAAVASILLFVAV). At 22–310 (KLLSTDTKTE…DSPAEISVNA (289 aa)) the chain is on the cytoplasmic side. Disordered regions lie at residues 38-85 (VGEL…DEYQ) and 110-162 (KAEK…LKEE). Residues 52–70 (PRARARRGLRNKTNRSKTQ) show a composition bias toward basic residues. Positions 76 to 85 (DYDDYDDEYQ) are enriched in acidic residues.

The protein belongs to the DDRGK1 family.

Its subcellular location is the endoplasmic reticulum membrane. Functionally, substrate adapter for ufmylation, the covalent attachment of the ubiquitin-like modifier UFM1 to substrate proteins. The polypeptide is DDRGK domain-containing protein 1 (Trichoplax adhaerens (Trichoplax reptans)).